A 240-amino-acid polypeptide reads, in one-letter code: UDP-2,3-diacylglucosamine hydrolase (240 aa).

Mn(2+)-binding residues include Asp-8, His-10, Asp-41, Asn-79, and His-114. 79-80 (NR) contacts substrate. 5 residues coordinate substrate: Asp-122, Ser-160, Asn-164, Lys-167, and His-195. Mn(2+) is bound by residues His-195 and His-197.

This sequence belongs to the LpxH family. Mn(2+) serves as cofactor.

It localises to the cell inner membrane. The enzyme catalyses UDP-2-N,3-O-bis[(3R)-3-hydroxytetradecanoyl]-alpha-D-glucosamine + H2O = 2-N,3-O-bis[(3R)-3-hydroxytetradecanoyl]-alpha-D-glucosaminyl 1-phosphate + UMP + 2 H(+). It functions in the pathway glycolipid biosynthesis; lipid IV(A) biosynthesis; lipid IV(A) from (3R)-3-hydroxytetradecanoyl-[acyl-carrier-protein] and UDP-N-acetyl-alpha-D-glucosamine: step 4/6. Functionally, hydrolyzes the pyrophosphate bond of UDP-2,3-diacylglucosamine to yield 2,3-diacylglucosamine 1-phosphate (lipid X) and UMP by catalyzing the attack of water at the alpha-P atom. Involved in the biosynthesis of lipid A, a phosphorylated glycolipid that anchors the lipopolysaccharide to the outer membrane of the cell. This Yersinia pestis bv. Antiqua (strain Angola) protein is UDP-2,3-diacylglucosamine hydrolase.